A 261-amino-acid polypeptide reads, in one-letter code: Imidazole glycerol phosphate synthase subunit HisF (261 aa).

Residues Asp16 and Asp135 contribute to the active site.

Belongs to the HisA/HisF family. Heterodimer of HisH and HisF.

Its subcellular location is the cytoplasm. It catalyses the reaction 5-[(5-phospho-1-deoxy-D-ribulos-1-ylimino)methylamino]-1-(5-phospho-beta-D-ribosyl)imidazole-4-carboxamide + L-glutamine = D-erythro-1-(imidazol-4-yl)glycerol 3-phosphate + 5-amino-1-(5-phospho-beta-D-ribosyl)imidazole-4-carboxamide + L-glutamate + H(+). It functions in the pathway amino-acid biosynthesis; L-histidine biosynthesis; L-histidine from 5-phospho-alpha-D-ribose 1-diphosphate: step 5/9. Its function is as follows. IGPS catalyzes the conversion of PRFAR and glutamine to IGP, AICAR and glutamate. The HisF subunit catalyzes the cyclization activity that produces IGP and AICAR from PRFAR using the ammonia provided by the HisH subunit. The protein is Imidazole glycerol phosphate synthase subunit HisF of Mycobacterium sp. (strain JLS).